The following is a 547-amino-acid chain: Chaperonin GroEL 2 (547 aa).

ATP is bound by residues 29-32, 86-90, G418, 482-484, and D498; these read TLGP, DGTTT, and NAA.

Belongs to the chaperonin (HSP60) family. In terms of assembly, forms a cylinder of 14 subunits composed of two heptameric rings stacked back-to-back. Interacts with the co-chaperonin GroES.

It is found in the cytoplasm. It catalyses the reaction ATP + H2O + a folded polypeptide = ADP + phosphate + an unfolded polypeptide.. Its function is as follows. Together with its co-chaperonin GroES, plays an essential role in assisting protein folding. The GroEL-GroES system forms a nano-cage that allows encapsulation of the non-native substrate proteins and provides a physical environment optimized to promote and accelerate protein folding. The protein is Chaperonin GroEL 2 of Corynebacterium efficiens (strain DSM 44549 / YS-314 / AJ 12310 / JCM 11189 / NBRC 100395).